Consider the following 149-residue polypeptide: ER export of PMA1 protein 1 (149 aa).

The Lumenal portion of the chain corresponds to 1 to 6; sequence MNLYGY. Residues 7–27 form a helical; Signal-anchor for type II membrane protein membrane-spanning segment; it reads FLLLIIVIAFIALLPLFSGIG. At 28–149 the chain is on the cytoplasmic side; that stretch reads TFKLTKPKSS…KKNEAYEGFV (122 aa).

As to quaternary structure, interacts with PMA1 and PSG1.

Its subcellular location is the endoplasmic reticulum membrane. The protein resides in the cytoplasmic vesicle. The protein localises to the COPI-coated vesicle membrane. It localises to the COPII-coated vesicle membrane. It is found in the golgi apparatus membrane. In terms of biological role, specific cargo receptor protein for the plasma membrane ATPase PMA1 that acts with PSG1 to promote the transport and maturation of PMA1. EXP1 and PSG1 probably act sequentially to promote PMA1 sorting between the ER and the Golgi, with EXP1 promoting PMA1 export from the ER to the Golgi while PSG1 has a role in PMA1 maturation or quality control in the Golgi. The chain is ER export of PMA1 protein 1 from Saccharomyces cerevisiae (strain ATCC 204508 / S288c) (Baker's yeast).